We begin with the raw amino-acid sequence, 313 residues long: Protein-methionine-sulfoxide reductase catalytic subunit MsrP (313 aa).

The tat-type signal signal peptide spans 1-44 (MARWRPDMAEREATPEALYLRRRDFLALGAAGAVGLLLPRGARA). Mo-molybdopterin is bound by residues N76, 79-80 (YE), C134, T169, N217, R222, and 233-235 (GAK).

The protein belongs to the MsrP family. In terms of assembly, heterodimer of a catalytic subunit (MsrP) and a heme-binding subunit (MsrQ). Mo-molybdopterin is required as a cofactor. Post-translationally, predicted to be exported by the Tat system. The position of the signal peptide cleavage has not been experimentally proven.

It localises to the periplasm. The enzyme catalyses L-methionyl-[protein] + a quinone + H2O = L-methionyl-(S)-S-oxide-[protein] + a quinol. It catalyses the reaction L-methionyl-[protein] + a quinone + H2O = L-methionyl-(R)-S-oxide-[protein] + a quinol. Functionally, part of the MsrPQ system that repairs oxidized periplasmic proteins containing methionine sulfoxide residues (Met-O), using respiratory chain electrons. Thus protects these proteins from oxidative-stress damage caused by reactive species of oxygen and chlorine generated by the host defense mechanisms. MsrPQ is essential for the maintenance of envelope integrity under bleach stress, rescuing a wide series of structurally unrelated periplasmic proteins from methionine oxidation. The catalytic subunit MsrP is non-stereospecific, being able to reduce both (R-) and (S-) diastereoisomers of methionine sulfoxide. This is Protein-methionine-sulfoxide reductase catalytic subunit MsrP from Anaeromyxobacter dehalogenans (strain 2CP-1 / ATCC BAA-258).